The sequence spans 240 residues: FAS1 domain-containing protein AN1527 (240 aa).

The N-terminal stretch at 1 to 24 (MRQLSTTALVLFLFFYCSISTAWS) is a signal peptide. Residues 91–239 (EPTISDVLPK…GEVWVIDGVI (149 aa)) enclose the FAS1 domain.

The protein localises to the vacuole. This Emericella nidulans (strain FGSC A4 / ATCC 38163 / CBS 112.46 / NRRL 194 / M139) (Aspergillus nidulans) protein is FAS1 domain-containing protein AN1527.